The primary structure comprises 245 residues: 1-(5-phosphoribosyl)-5-[(5-phosphoribosylamino)methylideneamino] imidazole-4-carboxamide isomerase (245 aa).

Asp7 acts as the Proton acceptor in catalysis. The Proton donor role is filled by Asp129.

The protein belongs to the HisA/HisF family.

The protein resides in the cytoplasm. The enzyme catalyses 1-(5-phospho-beta-D-ribosyl)-5-[(5-phospho-beta-D-ribosylamino)methylideneamino]imidazole-4-carboxamide = 5-[(5-phospho-1-deoxy-D-ribulos-1-ylimino)methylamino]-1-(5-phospho-beta-D-ribosyl)imidazole-4-carboxamide. It functions in the pathway amino-acid biosynthesis; L-histidine biosynthesis; L-histidine from 5-phospho-alpha-D-ribose 1-diphosphate: step 4/9. This chain is 1-(5-phosphoribosyl)-5-[(5-phosphoribosylamino)methylideneamino] imidazole-4-carboxamide isomerase, found in Cronobacter sakazakii (strain ATCC BAA-894) (Enterobacter sakazakii).